The primary structure comprises 693 residues: Phosphoribosylformylglycinamidine synthase subunit PurL (693 aa).

His34 is a catalytic residue. Tyr37 and Lys76 together coordinate ATP. Glu78 contributes to the Mg(2+) binding site. Substrate is bound by residues 79 to 82 (SHNH) and Arg101. His80 acts as the Proton acceptor in catalysis. A Mg(2+)-binding site is contributed by Asp102. Gln222 serves as a coordination point for substrate. Residue Asp248 coordinates Mg(2+). 292-294 (ETQ) contacts substrate. Residues Asp470 and Gly507 each coordinate ATP. Position 510 (Ser510) interacts with substrate.

Belongs to the FGAMS family. As to quaternary structure, monomer. Part of the FGAM synthase complex composed of 1 PurL, 1 PurQ and 2 PurS subunits.

The protein localises to the cytoplasm. It catalyses the reaction N(2)-formyl-N(1)-(5-phospho-beta-D-ribosyl)glycinamide + L-glutamine + ATP + H2O = 2-formamido-N(1)-(5-O-phospho-beta-D-ribosyl)acetamidine + L-glutamate + ADP + phosphate + H(+). It functions in the pathway purine metabolism; IMP biosynthesis via de novo pathway; 5-amino-1-(5-phospho-D-ribosyl)imidazole from N(2)-formyl-N(1)-(5-phospho-D-ribosyl)glycinamide: step 1/2. Part of the phosphoribosylformylglycinamidine synthase complex involved in the purines biosynthetic pathway. Catalyzes the ATP-dependent conversion of formylglycinamide ribonucleotide (FGAR) and glutamine to yield formylglycinamidine ribonucleotide (FGAM) and glutamate. The FGAM synthase complex is composed of three subunits. PurQ produces an ammonia molecule by converting glutamine to glutamate. PurL transfers the ammonia molecule to FGAR to form FGAM in an ATP-dependent manner. PurS interacts with PurQ and PurL and is thought to assist in the transfer of the ammonia molecule from PurQ to PurL. This chain is Phosphoribosylformylglycinamidine synthase subunit PurL, found in Pyrobaculum calidifontis (strain DSM 21063 / JCM 11548 / VA1).